A 207-amino-acid chain; its full sequence is LexA repressor (207 aa).

Positions 28–48 form a DNA-binding region, H-T-H motif; sequence VREIGEAVGLASSFTVHGHLS. Residues Ser130 and Lys168 each act as for autocatalytic cleavage activity in the active site.

The protein belongs to the peptidase S24 family. Homodimer.

The catalysed reaction is Hydrolysis of Ala-|-Gly bond in repressor LexA.. Its function is as follows. Represses a number of genes involved in the response to DNA damage (SOS response), including recA and lexA. In the presence of single-stranded DNA, RecA interacts with LexA causing an autocatalytic cleavage which disrupts the DNA-binding part of LexA, leading to derepression of the SOS regulon and eventually DNA repair. The sequence is that of LexA repressor from Staphylococcus aureus (strain Newman).